The sequence spans 186 residues: uncharacterized protein (186 aa).

Residues Met1 to Leu181 enclose the Macro domain.

It belongs to the MacroD-type family.

This is an uncharacterized protein from Thermoplasma volcanium (strain ATCC 51530 / DSM 4299 / JCM 9571 / NBRC 15438 / GSS1).